A 1915-amino-acid polypeptide reads, in one-letter code: Ankyrin repeat domain-containing protein 36A (1915 aa).

ANK repeat units follow at residues 31-60 (YHLK…DANK), 64-93 (KERT…ELNL), 97-126 (EDRT…NPNI), 130-159 (FGRT…NIEE), 163-192 (CEYQ…NVNA), and 196-225 (LGRS…DVLS). Disordered regions lie at residues 261 to 331 (PINS…DEQK), 470 to 619 (ATGQ…QKQS), 639 to 663 (MGGG…DKTD), 676 to 1203 (LQCG…KATS), and 1285 to 1304 (KDVQ…SEGE). 2 stretches are compositionally biased toward polar residues: residues 262 to 272 (INSNPVSSQKQ) and 297 to 306 (KSGTVSSQKQ). The span at 505-521 (SLTSSEESSERPPLSTL) shows a compositional bias: low complexity. Composition is skewed to basic and acidic residues over residues 551–562 (PAEKATSDDKDS) and 585–596 (PAEKATSDEKDS). 2 stretches are compositionally biased toward polar residues: residues 597-619 (VSNI…QKQS) and 645-657 (GTVS…ASKA). Composition is skewed to basic and acidic residues over residues 806–815 (RENKDGEKSR), 874–883 (RENKDGEKSR), 931–951 (SDEK…EISR), 976–985 (RENKDGEKSR), 1044–1053 (RENKDGEKSR), 1100–1121 (TSDE…EKSR), and 1134–1152 (ICDK…KDEQ). Positions 1175–1196 (VSNIPTEIKDGQQSGTVSSQKQ) are enriched in polar residues. Coiled-coil stretches lie at residues 1383 to 1466 (IKLK…TEEQ), 1504 to 1531 (KEDL…IKNQ), 1573 to 1614 (LAAL…ARCD), and 1727 to 1814 (NMLL…KRDD). Positions 1489 to 1508 (KTGGNNSNQVSETDEKEDLL) are disordered.

Belongs to the ANKRD36 family.

The chain is Ankyrin repeat domain-containing protein 36A (ANKRD36) from Homo sapiens (Human).